Here is a 72-residue protein sequence, read N- to C-terminus: Sperm protein associated with the nucleus on the X chromosome N1 (72 aa).

The disordered stretch occupies residues 1-44 (MEQPTSSINGEKRKSPCESNNENDEMQETPNRDLAPEPSLKKMK).

Belongs to the SPAN-X family.

The protein is Sperm protein associated with the nucleus on the X chromosome N1 (SPANXN1) of Homo sapiens (Human).